The following is a 371-amino-acid chain: Cathepsin W (371 aa).

The first 21 residues, 1-21 (MTLTAHLSYFLVLLLAGQGLS), serve as a signal peptide directing secretion. A propeptide spanning residues 22-125 (DSLLTKDAGP…KVESNTWGES (104 aa)) is cleaved from the precursor. Asn-48 and Asn-112 each carry an N-linked (GlcNAc...) asparagine glycan. 3 disulfides stabilise this stretch: Cys-148–Cys-189, Cys-182–Cys-224, and Cys-282–Cys-347. Cys-151 is an active-site residue. Residue Asn-203 is glycosylated (N-linked (GlcNAc...) asparagine). Residues His-289 and Asn-326 contribute to the active site. Asn-344 carries an N-linked (GlcNAc...) asparagine glycan.

This sequence belongs to the peptidase C1 family.

It localises to the endoplasmic reticulum. In terms of biological role, may have a specific function in the mechanism or regulation of T-cell cytolytic activity. The polypeptide is Cathepsin W (Ctsw) (Mus musculus (Mouse)).